The following is a 755-amino-acid chain: Oligopeptide transporter 1 (755 aa).

13 helical membrane-spanning segments follow: residues 58-78, 82-102, 134-154, 165-185, 226-246, 298-318, 370-390, 434-454, 462-482, 546-566, 614-634, 664-684, and 697-717; these read TWTL…FFGF, QLWV…KLMA, ITIF…ITIV, AAAM…AGIF, FFII…YLFP, FFAI…VLPI, YLSV…CATI, WWFI…CEGF, WWGL…IGVI, FIVQ…TTWW, GIYP…VPFW, AKAV…YYIF, and ILSA…FFAF.

This sequence belongs to the oligopeptide OPT transporter (TC 2.A.67.1) family. Highly expressed in flowers, and moderately expressed in leaves and stems.

It localises to the membrane. Involved in the translocation of tetra- and pentapeptides across the cellular membrane in an energy-dependent manner. This Arabidopsis thaliana (Mouse-ear cress) protein is Oligopeptide transporter 1 (OPT1).